A 122-amino-acid chain; its full sequence is Ribosome-binding factor A (122 aa).

It belongs to the RbfA family. As to quaternary structure, monomer. Binds 30S ribosomal subunits, but not 50S ribosomal subunits or 70S ribosomes.

It is found in the cytoplasm. One of several proteins that assist in the late maturation steps of the functional core of the 30S ribosomal subunit. Associates with free 30S ribosomal subunits (but not with 30S subunits that are part of 70S ribosomes or polysomes). Required for efficient processing of 16S rRNA. May interact with the 5'-terminal helix region of 16S rRNA. In Burkholderia thailandensis (strain ATCC 700388 / DSM 13276 / CCUG 48851 / CIP 106301 / E264), this protein is Ribosome-binding factor A.